The chain runs to 394 residues: Enoyl-[acyl-carrier-protein] reductase [NADH] (394 aa).

NAD(+) is bound by residues 48 to 53 (GASTGY), 74 to 75 (YE), 111 to 112 (DA), and 139 to 140 (LA). Position 225 (Tyr225) interacts with substrate. Tyr235 (proton donor) is an active-site residue. Residues Lys244 and 273–275 (LVT) contribute to the NAD(+) site.

This sequence belongs to the TER reductase family. Monomer.

It catalyses the reaction a 2,3-saturated acyl-[ACP] + NAD(+) = a (2E)-enoyl-[ACP] + NADH + H(+). It functions in the pathway lipid metabolism; fatty acid biosynthesis. Its function is as follows. Involved in the final reduction of the elongation cycle of fatty acid synthesis (FAS II). Catalyzes the reduction of a carbon-carbon double bond in an enoyl moiety that is covalently linked to an acyl carrier protein (ACP). This Opitutus terrae (strain DSM 11246 / JCM 15787 / PB90-1) protein is Enoyl-[acyl-carrier-protein] reductase [NADH].